We begin with the raw amino-acid sequence, 523 residues long: FAD:protein FMN transferase (523 aa).

The next 3 helical transmembrane spans lie at 88–108 (LLAG…VALA), 118–138 (GGAA…LVLL), and 169–189 (GLAL…TAPA). Residues 277–279 (LFD) and Asp-336 each bind FAD. Mg(2+) is bound at residue Ala-339. FAD contacts are provided by residues Lys-342 and 423–425 (HII). Mg(2+) contacts are provided by Asp-450 and Thr-454.

The protein in the N-terminal section; belongs to the RseC family. This sequence in the C-terminal section; belongs to the ApbE family. Requires Mg(2+) as cofactor.

The protein localises to the cell membrane. It carries out the reaction L-threonyl-[protein] + FAD = FMN-L-threonyl-[protein] + AMP + H(+). Its function is as follows. Flavin transferase that catalyzes the transfer of the FMN moiety of FAD and its covalent binding to the hydroxyl group of a threonine residue in a target flavoprotein. Is likely involved in the modification of RnfG and RnfD. Required for nitrogen fixation. The polypeptide is FAD:protein FMN transferase (Rhodobacter capsulatus (Rhodopseudomonas capsulata)).